Consider the following 265-residue polypeptide: UPF0354 protein BH3252 (265 aa).

It belongs to the UPF0354 family.

The polypeptide is UPF0354 protein BH3252 (Halalkalibacterium halodurans (strain ATCC BAA-125 / DSM 18197 / FERM 7344 / JCM 9153 / C-125) (Bacillus halodurans)).